The following is a 192-amino-acid chain: Thymidine kinase (192 aa).

Residues 9–16 and 87–90 each bind ATP; these read SAMNAGKS and DECQ. Glu88 acts as the Proton acceptor in catalysis. Zn(2+) is bound by residues Cys145, Cys147, Cys182, and His185.

This sequence belongs to the thymidine kinase family. In terms of assembly, homotetramer.

It localises to the cytoplasm. The enzyme catalyses thymidine + ATP = dTMP + ADP + H(+). This Vibrio cholerae serotype O1 (strain ATCC 39315 / El Tor Inaba N16961) protein is Thymidine kinase.